Here is a 331-residue protein sequence, read N- to C-terminus: MTDATIYYDDDAESTVLDDKTVAVLGYGSQGHAHAQNLDDSGVDVVVGLREDSSSRSAAEADGLDVATPRGAAEQADLVSVLVPDTVQPAVYEQIEDVLQPGDTLQFAHGFNIHYGQIEPSEDVNVTMVAPKSPGHLVRRNYENDEGTPGLLAVYQDPSGEAHDLGLAYAKAIGCTRAGVVETTFREETETDLFGEQAVLCGGVTSLVKTGYETLVDAGYSPEMAYFECLNELKLIVDLMYEGGNSEMWDSVSDTAEYGGLTRGDRIVDDHAREKMEEVLEEVQNGTFAREWISENQAGRPSYKQLRAAEKNHDIEAVGEDLRALFAWGDD.

In terms of domain architecture, KARI N-terminal Rossmann spans 4 to 183 (ATIYYDDDAE…GCTRAGVVET (180 aa)). NADP(+) is bound by residues 27–30 (YGSQ), Arg-50, Ser-53, Ser-55, and 85–88 (DTVQ). Residue His-109 is part of the active site. Gly-135 provides a ligand contact to NADP(+). The 146-residue stretch at 184–329 (TFREETETDL…EDLRALFAWG (146 aa)) folds into the KARI C-terminal knotted domain. Asp-192, Glu-196, Glu-228, and Glu-232 together coordinate Mg(2+). Substrate is bound at residue Ser-253.

It belongs to the ketol-acid reductoisomerase family. Mg(2+) is required as a cofactor.

The catalysed reaction is (2R)-2,3-dihydroxy-3-methylbutanoate + NADP(+) = (2S)-2-acetolactate + NADPH + H(+). It catalyses the reaction (2R,3R)-2,3-dihydroxy-3-methylpentanoate + NADP(+) = (S)-2-ethyl-2-hydroxy-3-oxobutanoate + NADPH + H(+). It participates in amino-acid biosynthesis; L-isoleucine biosynthesis; L-isoleucine from 2-oxobutanoate: step 2/4. The protein operates within amino-acid biosynthesis; L-valine biosynthesis; L-valine from pyruvate: step 2/4. Its function is as follows. Involved in the biosynthesis of branched-chain amino acids (BCAA). Catalyzes an alkyl-migration followed by a ketol-acid reduction of (S)-2-acetolactate (S2AL) to yield (R)-2,3-dihydroxy-isovalerate. In the isomerase reaction, S2AL is rearranged via a Mg-dependent methyl migration to produce 3-hydroxy-3-methyl-2-ketobutyrate (HMKB). In the reductase reaction, this 2-ketoacid undergoes a metal-dependent reduction by NADPH to yield (R)-2,3-dihydroxy-isovalerate. The chain is Ketol-acid reductoisomerase (NADP(+)) from Natronomonas pharaonis (strain ATCC 35678 / DSM 2160 / CIP 103997 / JCM 8858 / NBRC 14720 / NCIMB 2260 / Gabara) (Halobacterium pharaonis).